Here is a 303-residue protein sequence, read N- to C-terminus: MELRHLRYFVTVVEEQSISKAAEKLCIAQPPLSRQIQKLEEELGIQLFERGFRPAKVTEAGMFFYQHAVQILTHTAQASSMAKRIATVSQTLRIGYVSSLLYGLLPEIIYLFRQQNPEIHIELIECGTKDQINALKQGKIDLGFGRLKITDPAIRRIVLHKEQLKLAIHKHHHLNQFAATGVHLSQIIDEPMLLYPVSQKPNFATFIQSLFTELGLVPSKLTEIREIQLALGLVAAGEGVCIVPASAMDIGVKNLLYIPILDDDAYSPISLAVRNMDHSNYIPKILACVQEVFATHHIRPLIE.

The HTH lysR-type domain occupies 1 to 58 (MELRHLRYFVTVVEEQSISKAAEKLCIAQPPLSRQIQKLEEELGIQLFERGFRPAKVT). Residues 18–37 (ISKAAEKLCIAQPPLSRQIQ) constitute a DNA-binding region (H-T-H motif). 2 residues coordinate cis,cis-muconate: Ser99 and Thr128.

It belongs to the LysR transcriptional regulatory family. Homotetramer in solution.

In terms of biological role, positively regulates the expression of catA, catBCIJFD and benPK in response to cis,cis-muconate. It binds to the catB-catM intercistronic region, to a specific sequence upstream of catA and to the benPK promoter region. Can also repress pca genes. This chain is HTH-type transcriptional regulator CatM (catM), found in Acinetobacter baylyi (strain ATCC 33305 / BD413 / ADP1).